The following is a 341-amino-acid chain: Probable membrane-associated kinase regulator 1 (341 aa).

5 disordered regions span residues 1–29 (MRRQPPRPRNSPPQSHSSPSSSSSEFEFN), 67–122 (TLGS…SSRP), 158–185 (PKTNLHHHSSSSSTATTAAAPSSVKRMS), 206–230 (LSPKQSSNIKTESSSSLKDSGNNIR), and 288–310 (RGGFPVHQGSCSSSSSNNNSVSS). Composition is skewed to low complexity over residues 12–29 (PPQSHSSPSSSSSEFEFN), 67–108 (TLGS…SFPL), and 167–180 (SSSSTATTAAAPSS). Residues 208 to 230 (PKQSSNIKTESSSSLKDSGNNIR) are compositionally biased toward polar residues. The span at 297 to 310 (SCSSSSSNNNSVSS) shows a compositional bias: low complexity.

In terms of assembly, a C-terminus-derived peptide binds BRI1 in vitro.

Its subcellular location is the cell membrane. In terms of biological role, may negatively regulate brassinosteroid signaling. This is Probable membrane-associated kinase regulator 1 (MAKR1) from Arabidopsis thaliana (Mouse-ear cress).